Here is a 362-residue protein sequence, read N- to C-terminus: Peptide chain release factor 1 (362 aa).

Position 237 is an N5-methylglutamine (Gln-237). A compositionally biased stretch (basic and acidic residues) spans 285-295 (EEKRHAEEAST). A disordered region spans residues 285–311 (EEKRHAEEASTRRNLLGSGDRSDRIRT).

This sequence belongs to the prokaryotic/mitochondrial release factor family. Post-translationally, methylated by PrmC. Methylation increases the termination efficiency of RF1.

Its subcellular location is the cytoplasm. Peptide chain release factor 1 directs the termination of translation in response to the peptide chain termination codons UAG and UAA. This Photobacterium profundum (strain SS9) protein is Peptide chain release factor 1.